The chain runs to 123 residues: Large ribosomal subunit protein uL14 (123 aa).

It belongs to the universal ribosomal protein uL14 family. As to quaternary structure, part of the 50S ribosomal subunit. Forms a cluster with proteins L3 and L19. In the 70S ribosome, L14 and L19 interact and together make contacts with the 16S rRNA in bridges B5 and B8.

Binds to 23S rRNA. Forms part of two intersubunit bridges in the 70S ribosome. In Aliivibrio fischeri (strain ATCC 700601 / ES114) (Vibrio fischeri), this protein is Large ribosomal subunit protein uL14.